The sequence spans 947 residues: Pyruvate, phosphate dikinase 1, chloroplastic (947 aa).

Residues 1-71 (MPSVSRAVCV…PLRAVAAPIP (71 aa)) constitute a chloroplast transit peptide. Positions 39-60 (RHGKPEVAIRSGSGGSARGGHC) are disordered. Thr-527 carries the phosphothreonine; by PDRP1 modification. His-529 functions as the Tele-phosphohistidine intermediate in the catalytic mechanism. The substrate site is built by Arg-635, Arg-692, Glu-821, Gly-842, Thr-843, Asn-844, and Asp-845. Glu-821 provides a ligand contact to Mg(2+). Asp-845 contributes to the Mg(2+) binding site. Cys-907 (proton donor) is an active-site residue.

This sequence belongs to the PEP-utilizing enzyme family. Homotetramer. The cofactor is Mg(2+). In terms of processing, phosphorylation of Thr-527 in the dark inactivates the enzyme. Dephosphorylation upon light stimulation reactivates the enzyme. Phosphorylation increases during the first 20 days post-pollination and then remains constant through the 40-day mature seed stage. Reactivation by dephosphorylation during germination is negligible. In terms of tissue distribution, isoform 1 is only expressed in green leaves. Isoform 2 is found in roots, stems, rachis branches, leaf sheaths, green leaves and spikelets. The non-phosphorylated PPDK in mature seeds is endosperm-localized.

It is found in the plastid. The protein resides in the chloroplast. The protein localises to the cytoplasm. It carries out the reaction pyruvate + phosphate + ATP = phosphoenolpyruvate + AMP + diphosphate + H(+). With respect to regulation, activated by light-induced dephosphorylation. Inhibited by dark-induced phosphorylation. Both reactions are catalyzed by PDRP1. Its function is as follows. Formation of phosphoenolpyruvate. The cytoplasmic isoform supports the biosynthetic processes in the nascent endosperm and provides an efficient mechanism for glycolytic ATP synthesis in oxygen depleted tissues. May be involved in regulating the flux of carbon into starch and fatty acids of seeds and in the remobilization of nitrogen reserves in senescing leaves. The chain is Pyruvate, phosphate dikinase 1, chloroplastic (PPDK1) from Oryza sativa subsp. japonica (Rice).